The chain runs to 382 residues: Mannitol-1-phosphate 5-dehydrogenase (382 aa).

3-14 (ALHFGAGNIGRG) is a binding site for NAD(+). Lys269 bears the N6-acetyllysine mark.

Belongs to the mannitol dehydrogenase family. In terms of assembly, monomer.

The catalysed reaction is D-mannitol 1-phosphate + NAD(+) = beta-D-fructose 6-phosphate + NADH + H(+). The sequence is that of Mannitol-1-phosphate 5-dehydrogenase from Escherichia coli O157:H7.